Here is a 49-residue protein sequence, read N- to C-terminus: Large ribosomal subunit protein bL33 (49 aa).

It belongs to the bacterial ribosomal protein bL33 family.

This is Large ribosomal subunit protein bL33 from Syntrophomonas wolfei subsp. wolfei (strain DSM 2245B / Goettingen).